A 422-amino-acid chain; its full sequence is Dipeptidase aclJ (422 aa).

Residues 28–45 form a helical membrane-spanning segment; it reads LAYSVTLTLVALFFTFAL. Residues H77 and D79 each coordinate Zn(2+). The N-linked (GlcNAc...) asparagine glycan is linked to N96. C128 and C219 are disulfide-bonded. E190 contributes to the Zn(2+) binding site. Residue H217 participates in substrate binding. N-linked (GlcNAc...) asparagine glycosylation is present at N270. C287 and C319 are joined by a disulfide. Substrate-binding residues include R291 and D351.

Belongs to the metallo-dependent hydrolases superfamily. Peptidase M19 family. It depends on Zn(2+) as a cofactor.

It localises to the membrane. It catalyses the reaction an L-aminoacyl-L-amino acid + H2O = 2 an L-alpha-amino acid. The protein operates within mycotoxin biosynthesis. Its function is as follows. Dipeptidase; part of the gene cluster that mediates the biosynthesis of aspirochlorine (or antibiotic A30641), an unusual halogenated spiro compound with distinctive antifungal properties due to selective inhibition of protein biosynthesis, and which is also active against bacteria, viruses, and murine tumor cells. The non-ribosomal peptide synthetase (NRPS) aclP is responsible the formation of the diketopiperazine (DKP) core from the condensation of 2 phenylalanine residues. One Phe residue is tailored into chlorotyrosine by hydroxylation and chlorination, whereas the second Phe undergoes an unprecedented C-C bond cleavage to be converted into glycine. After formation of the DKP, sulfur is incorporated into the DKP by conjugation with glutathione by aclG, followed by its stepwise degradation to the thiol by aclI, aclJ and aclK, and the dithiol oxidation by aclT. In addition, oxygenases (aclB, aclC, aclL and aclO) and O-methyltransferases (aclM and aclU) act as tailoring enzymes to produce the intermediate dechloroaspirochlorine. Ultimately, chlorination of dechloroaspirochlorine by the halogenase aclH is the last step in the aspirochlorine pathway. The chain is Dipeptidase aclJ from Aspergillus oryzae (strain ATCC 42149 / RIB 40) (Yellow koji mold).